The primary structure comprises 567 residues: Oxygen-dependent choline dehydrogenase (567 aa).

Position 6 to 35 (6 to 35 (DYIIVGAGSAGNTLATRLTEDEGVTVLLLE)) interacts with FAD. Histidine 475 acts as the Proton acceptor in catalysis.

It belongs to the GMC oxidoreductase family. The cofactor is FAD.

The enzyme catalyses choline + A = betaine aldehyde + AH2. It catalyses the reaction betaine aldehyde + NAD(+) + H2O = glycine betaine + NADH + 2 H(+). It participates in amine and polyamine biosynthesis; betaine biosynthesis via choline pathway; betaine aldehyde from choline (cytochrome c reductase route): step 1/1. Functionally, involved in the biosynthesis of the osmoprotectant glycine betaine. Catalyzes the oxidation of choline to betaine aldehyde and betaine aldehyde to glycine betaine at the same rate. The chain is Oxygen-dependent choline dehydrogenase from Pseudomonas fluorescens (strain SBW25).